The chain runs to 476 residues: Aspartyl/glutamyl-tRNA(Asn/Gln) amidotransferase subunit B (476 aa).

The protein belongs to the GatB/GatE family. GatB subfamily. Heterotrimer of A, B and C subunits.

The enzyme catalyses L-glutamyl-tRNA(Gln) + L-glutamine + ATP + H2O = L-glutaminyl-tRNA(Gln) + L-glutamate + ADP + phosphate + H(+). It carries out the reaction L-aspartyl-tRNA(Asn) + L-glutamine + ATP + H2O = L-asparaginyl-tRNA(Asn) + L-glutamate + ADP + phosphate + 2 H(+). In terms of biological role, allows the formation of correctly charged Asn-tRNA(Asn) or Gln-tRNA(Gln) through the transamidation of misacylated Asp-tRNA(Asn) or Glu-tRNA(Gln) in organisms which lack either or both of asparaginyl-tRNA or glutaminyl-tRNA synthetases. The reaction takes place in the presence of glutamine and ATP through an activated phospho-Asp-tRNA(Asn) or phospho-Glu-tRNA(Gln). In Clostridium botulinum (strain Loch Maree / Type A3), this protein is Aspartyl/glutamyl-tRNA(Asn/Gln) amidotransferase subunit B.